Reading from the N-terminus, the 146-residue chain is Large ribosomal subunit protein uL15 (146 aa).

The interval 1–57 (MKLFELQPAPGSKKLPKRKGRGHGTGNGKTAGRGHKGQNARSGGGVRPGFEGGQMPL) is disordered. Residues 42–52 (SGGGVRPGFEG) are compositionally biased toward gly residues.

This sequence belongs to the universal ribosomal protein uL15 family. Part of the 50S ribosomal subunit.

Functionally, binds to the 23S rRNA. This Acetivibrio thermocellus (strain ATCC 27405 / DSM 1237 / JCM 9322 / NBRC 103400 / NCIMB 10682 / NRRL B-4536 / VPI 7372) (Clostridium thermocellum) protein is Large ribosomal subunit protein uL15.